The following is a 388-amino-acid chain: Probable aspartic-type endopeptidase MCYG_06955 (388 aa).

Positions 1 to 21 (MMGPFFYFTAYVSLLFAFTQA) are cleaved as a signal peptide. Residues N82 and N104 are each glycosylated (N-linked (GlcNAc...) asparagine). The 289-residue stretch at 96 to 384 (FVNEITVGND…DYDGPKIGFA (289 aa)) folds into the Peptidase A1 domain. D112 is a catalytic residue. N-linked (GlcNAc...) asparagine glycans are attached at residues N209 and N261. Residue D278 is part of the active site. 2 N-linked (GlcNAc...) asparagine glycosylation sites follow: N315 and N320.

It belongs to the peptidase A1 family.

It is found in the secreted. Functionally, probable aspartic-type endopeptidase which contributes to virulence. The chain is Probable aspartic-type endopeptidase MCYG_06955 from Arthroderma otae (strain ATCC MYA-4605 / CBS 113480) (Microsporum canis).